The following is a 207-amino-acid chain: Peptidyl-tRNA hydrolase (207 aa).

Position 15 (Y15) interacts with tRNA. H20 serves as the catalytic Proton acceptor. 3 residues coordinate tRNA: F66, N68, and N114. A disordered region spans residues 187 to 207 (HTTKPPRPKPARPATAESDKG). Residues 198 to 207 (RPATAESDKG) are compositionally biased toward low complexity.

This sequence belongs to the PTH family. Monomer.

The protein localises to the cytoplasm. The enzyme catalyses an N-acyl-L-alpha-aminoacyl-tRNA + H2O = an N-acyl-L-amino acid + a tRNA + H(+). Its function is as follows. Hydrolyzes ribosome-free peptidyl-tRNAs (with 1 or more amino acids incorporated), which drop off the ribosome during protein synthesis, or as a result of ribosome stalling. In terms of biological role, catalyzes the release of premature peptidyl moieties from peptidyl-tRNA molecules trapped in stalled 50S ribosomal subunits, and thus maintains levels of free tRNAs and 50S ribosomes. This is Peptidyl-tRNA hydrolase from Delftia acidovorans (strain DSM 14801 / SPH-1).